Reading from the N-terminus, the 1164-residue chain is FH1/FH2 domain-containing protein 1 (1164 aa).

One can recognise a GBD/FH3 domain in the interval 53-458 (AQIPAVHRLL…AAETEKQVAL (406 aa)). 2 disordered regions span residues 340-411 (DIEE…VGPP) and 470-500 (MPNE…QSPA). A compositionally biased stretch (basic and acidic residues) spans 355 to 368 (KPSSEEGKRSRRSL). S367 carries the post-translational modification Phosphoserine. Low complexity predominate over residues 402–411 (GPASSPVGPP). Phosphoserine is present on S486. An FH1 domain is found at 487 to 615 (PETAPAARTP…LAAPLPHSVP (129 aa)). T495 is modified (phosphothreonine). A phosphoserine mark is found at S498, S523, and S573. The tract at residues 566 to 619 (GKDIPAPSPPLPLLSGVPPPPPLPPPPPIKGPFPPPPPLPLAAPLPHSVPDSSA) is disordered. Residues 571–608 (APSPPLPLLSGVPPPPPLPPPPPIKGPFPPPPPLPLAA) show a composition bias toward pro residues. Residues 612–807 (HSVPDSSALP…AEPLFDLKVG (196 aa)) form an interaction with ROCK1 region. Residues 616–1013 (DSSALPTKRK…YRERNKTRGR (398 aa)) form the FH2 domain. Residue T690 is modified to Phosphothreonine. Residues 884–921 (LTRCAKVDFEQLTENLGQLERRSRAAEESLRSLAKHEL) are a coiled coil. The segment at 1020–1143 (KFSGVAGEAP…NRKSLRRTLK (124 aa)) is disordered. Over residues 1028–1041 (APSNPSVPVAVSSG) the composition is skewed to low complexity. One can recognise a DAD domain in the interval 1053–1133 (MKSLLTSRPE…AARERKRSRG (81 aa)). Polar residues predominate over residues 1073-1089 (MVQSSSPIMPTVGPSTA). Residues 1127 to 1142 (ERKRSRGNRKSLRRTL) show a composition bias toward basic residues.

Belongs to the formin homology family. Self-associates via the FH2 domain. Binds to F-actin via its N-terminus. Binds to the cytoplasmic domain of CD21 via its C-terminus. Interacts with ROCK1 in a Src-dependent manner. Post-translationally, phosphorylated by ROCK1. As to expression, ubiquitous. Highly expressed in spleen.

The protein localises to the cytoplasm. The protein resides in the cytoskeleton. Its subcellular location is the cell projection. It is found in the bleb. In terms of biological role, required for the assembly of F-actin structures, such as stress fibers. Depends on the Rho-ROCK cascade for its activity. Contributes to the coordination of microtubules with actin fibers and plays a role in cell elongation. Acts synergistically with ROCK1 to promote SRC-dependent non-apoptotic plasma membrane blebbing. The polypeptide is FH1/FH2 domain-containing protein 1 (FHOD1) (Homo sapiens (Human)).